A 311-amino-acid chain; its full sequence is Fucose-specific lectin (311 aa).

A run of 6 repeats spans residues 1 to 53, 54 to 103, 104 to 151, 152 to 209, 210 to 256, and 257 to 311. Residues 1–311 form a 6 X approximate tandem repeats region; the sequence is MSTPGAQEVL…LGRRALPPAE (311 aa). Residues arginine 25, glutamate 37, tryptophan 44, arginine 73, glutamate 85, tryptophan 94, arginine 126, glutamate 138, tryptophan 146, arginine 177, glutamine 189, tryptophan 198, arginine 230, glutamine 242, arginine 277, and glutamate 291 each coordinate beta-L-fucose.

This sequence belongs to the fungal fucose-specific lectin family. As to quaternary structure, homodimer.

Its function is as follows. Lectin that specifically binds to L-fucose and weakly reacts with mannose and N-acetyl-neuraminic acid. Has strongest preference for the alpha-1,6-fucosylated chain (core fucose) on glycoproteins among alpha-1,2-, alpha-1,3-, alpha-1,4-, and alpha-1,6-fucosylated chains. Binds to fucose residues of IgE in mice and human, causing antigen-independent IgE-mediated mast cell activation and anaphylactoid reactions in mice and is possibly implicated in allergic response to Aspergillus oryzae in humans. Induces secretion of pro-inflammatory cytokines IL6 and IL8 implicated in ocular diseases such as mycotic keratitis, probably through its interaction with host toll-like receptors TLR2 and TLR4, followed by up-regulation of pro-inflammatory cytokines. This is Fucose-specific lectin from Aspergillus oryzae (strain ATCC 42149 / RIB 40) (Yellow koji mold).